Here is a 215-residue protein sequence, read N- to C-terminus: Cytochrome b6 (215 aa).

Residues 32–52 (IFYCLGGITFTSFVIQVASGF) traverse the membrane as a helical segment. Position 35 (cysteine 35) interacts with heme c. Heme b is bound by residues histidine 86 and histidine 100. The next 3 membrane-spanning stretches (helical) occupy residues 90 to 110 (ASMMVLMMILHIFRVYLTGGF), 116 to 136 (LTWVTGVILSVLTVSFGVTGY), and 186 to 206 (LHTFVLPLLTAVFMLMHFLMI). The heme b site is built by histidine 187 and histidine 202.

This sequence belongs to the cytochrome b family. PetB subfamily. The 4 large subunits of the cytochrome b6-f complex are cytochrome b6, subunit IV (17 kDa polypeptide, PetD), cytochrome f and the Rieske protein, while the 4 small subunits are PetG, PetL, PetM and PetN. The complex functions as a dimer. Heme b serves as cofactor. The cofactor is heme c.

It is found in the plastid. The protein localises to the chloroplast thylakoid membrane. In terms of biological role, component of the cytochrome b6-f complex, which mediates electron transfer between photosystem II (PSII) and photosystem I (PSI), cyclic electron flow around PSI, and state transitions. The chain is Cytochrome b6 from Chaetosphaeridium globosum (Charophycean green alga).